We begin with the raw amino-acid sequence, 224 residues long: MLTHEISENEKPREKLQNYGIEALSSSELVALIIETGTKNESVLTIANRIIMKFKNVGEMQYASIEEFQLVNGIGIAKASKIMAAIELGRRISIVTEQEEVVVRCPEDAVKLVMPELAFLFQEHFHCLFLNTKNQVIYRQTIFVGGLNASIVHPREVFRLALRKSAASIMCFHNHPSGDPTPSSEDLLVTKRLAEAGNIVGITLLDHIIIGKNKYISLKEKGYF.

The 123-residue stretch at 102–224 (VVRCPEDAVK…YISLKEKGYF (123 aa)) folds into the MPN domain. Zn(2+) is bound by residues H173, H175, and D186. A JAMM motif motif is present at residues 173–186 (HNHPSGDPTPSSED).

Belongs to the UPF0758 family.

The protein is UPF0758 protein lmo1549 of Listeria monocytogenes serovar 1/2a (strain ATCC BAA-679 / EGD-e).